The sequence spans 90 residues: Small ribosomal subunit protein uS15c (90 aa).

The protein belongs to the universal ribosomal protein uS15 family. Part of the 30S ribosomal subunit.

It localises to the plastid. Its subcellular location is the chloroplast. This Platanus occidentalis (Sycamore) protein is Small ribosomal subunit protein uS15c (rps15).